Reading from the N-terminus, the 203-residue chain is Calcineurin B-like protein 5 (203 aa).

The N-myristoyl glycine moiety is linked to residue G2. EF-hand domains lie at 30–65 (EVEV…KNTK), 66–101 (KRSL…FHPN), 103–138 (SPRD…VLEE), and 147–182 (IIDS…YPLT).

This sequence belongs to the calcineurin regulatory subunit family. Homodimer. Interacts with PP2CA, CIPK2, CIPK11, CIPK23 and CIPK24. Post-translationally, both N-myristoylation and calcium-mediated conformational changes are essential for its function. As to expression, expressed in green tissues, but not in the roots.

The protein localises to the cytoplasm. Its subcellular location is the nucleus. Acts as a calcium sensor. CBL proteins interact with CIPK serine-threonine protein kinases. Binding of a CBL protein to the regulatory NAF domain of a CIPK protein lead to the activation of the kinase in a calcium-dependent manner. May function as a positive regulator of salt or drought responses. The chain is Calcineurin B-like protein 5 (CBL5) from Arabidopsis thaliana (Mouse-ear cress).